The chain runs to 601 residues: MFSCFCFSLQDNSFGSAAVTECDEDTVSVHEDEDDCSGLRDEDNKENYPQVAARLDELALPSHEAQQHVEQTLPVDGVLRTSMGNFKSRKPKSILRAESGRNHGESQETEHVVPSQSECQGRAGTPAHESPQSSIFRCQETVRLQPRIDQRATIWPKDAFGTQQDLHENSLLKLQALESGLCSAFLTTQEEDGQVHGVKDPAPASTQSAPADSADPADPMPAHKDAPGDADGTSEDLQSAGTSRLLYHITDGDNPLLSPRCSIFSQSQRFNLDPESAPSPPSSQQFMMPRSSSRCGSGDGKEPQTITQLTKHIQSLKRKIRKFEEKFEQEKKYRPSHGDKTSNPEVLKWMNDLAKGRKQLKELKLKLSEEQGSTPKGPRRNLSCEQPPVPRENGKSEAVGPEPGSSGEETSDAVVPEKREQTPPQDDGKGTKQDKNLIKPLYDRCRGIKQILPTPSLIPTIQEEEDSDEDCPQGSQQPSLPDPVSRLPVGDHLIYSETEPVRTLLPDEKKEGKQPALSMSNLHEATMPVLLDHLRETRADKKRLRKALREFEEQFFKQTGRSPQKEDRMPMADEYCEYKHIKAKLRLLEVLISKQDVAKTI.

Disordered regions lie at residues 82–134 and 192–238; these read SMGN…PQSS and DGQV…EDLQ. Basic and acidic residues predominate over residues 98–111; that stretch reads ESGRNHGESQETEH. Phosphoserine is present on serine 130. Residues 200–217 are compositionally biased toward low complexity; it reads DPAPASTQSAPADSADPA. Residue serine 258 is modified to Phosphoserine. Disordered regions lie at residues 268–304, 327–352, and 366–485; these read QRFN…KEPQ, FEQE…WMND, and KLSE…DPVS. The segment covering 282–294 has biased composition (low complexity); that stretch reads SSQQFMMPRSSSR. A compositionally biased stretch (basic and acidic residues) spans 327-342; it reads FEQEKKYRPSHGDKTS. Residues serine 405 and serine 406 each carry the phosphoserine modification. Residues 415–446 are compositionally biased toward basic and acidic residues; sequence VPEKREQTPPQDDGKGTKQDKNLIKPLYDRCR. Over residues 462-471 the composition is skewed to acidic residues; it reads QEEEDSDEDC.

It belongs to the FAM13 family.

In Mus musculus (Mouse), this protein is Protein FAM13C (Fam13c).